The following is a 426-amino-acid chain: MSYVNELKSKHGGLTAHIVKTEKFKTVSLIFKMLAPLTKDQVTKRALLPHVLLRGTKSHPKTAGLRSYLDELYGTSVSADLTKKGERHVITFRLEIPNEKYLKDQTPLLEKGLQLLAELVFSPALEGDAFQSQYVAQEKRTLKQRIQAVYDDKMRYSNLRLIQEMCKNDPYALHVNGEIDDVDDITAEQLYETYQSAIQKDQLDLYVVGDVDSNQVQSAIDKYFKTEERTLGMIENNHADEKVQPKEVIDEEDVKQGKLNIGYRTSITYTDQDYPALQVFNGLFGGFSHSKLFINVREKASLAYYAASRIESFKGLLMVMSGIEVKNFEQAVSIIAEQFQAMKNGDFSEQDIAQTKAVIRNQVLETIDTAYGLSEFLYQQAAAQVEIPIEDFLANIENVTKEDIIKAGEKIQLDTTYFLKGTEGAS.

2 residues coordinate Zn(2+): H50 and E138.

The protein belongs to the peptidase M16 family.

The polypeptide is Probable inactive metalloprotease YmfF (ymfF) (Bacillus subtilis (strain 168)).